A 195-amino-acid polypeptide reads, in one-letter code: 3-isopropylmalate dehydratase small subunit (195 aa).

It belongs to the LeuD family. LeuD type 1 subfamily. Heterodimer of LeuC and LeuD.

The catalysed reaction is (2R,3S)-3-isopropylmalate = (2S)-2-isopropylmalate. It participates in amino-acid biosynthesis; L-leucine biosynthesis; L-leucine from 3-methyl-2-oxobutanoate: step 2/4. Functionally, catalyzes the isomerization between 2-isopropylmalate and 3-isopropylmalate, via the formation of 2-isopropylmaleate. This is 3-isopropylmalate dehydratase small subunit from Thermobifida fusca (strain YX).